We begin with the raw amino-acid sequence, 94 residues long: Large ribosomal subunit protein bL25 (94 aa).

This sequence belongs to the bacterial ribosomal protein bL25 family. Part of the 50S ribosomal subunit; part of the 5S rRNA/L5/L18/L25 subcomplex. Contacts the 5S rRNA. Binds to the 5S rRNA independently of L5 and L18.

In terms of biological role, this is one of the proteins that binds to the 5S RNA in the ribosome where it forms part of the central protuberance. The protein is Large ribosomal subunit protein bL25 of Salmonella gallinarum (strain 287/91 / NCTC 13346).